The following is a 212-amino-acid chain: Pyridoxine/pyridoxamine 5'-phosphate oxidase (212 aa).

Substrate-binding positions include 8 to 11 (RREY) and K66. FMN is bound by residues 61–66 (RIVLLK), 76–77 (FT), R82, K83, and Q105. The substrate site is built by Y123, R127, and S131. FMN-binding positions include 140–141 (QS) and W185. A substrate-binding site is contributed by 191-193 (RLH). R195 lines the FMN pocket.

It belongs to the pyridoxamine 5'-phosphate oxidase family. In terms of assembly, homodimer. FMN serves as cofactor.

It carries out the reaction pyridoxamine 5'-phosphate + O2 + H2O = pyridoxal 5'-phosphate + H2O2 + NH4(+). The enzyme catalyses pyridoxine 5'-phosphate + O2 = pyridoxal 5'-phosphate + H2O2. The protein operates within cofactor metabolism; pyridoxal 5'-phosphate salvage; pyridoxal 5'-phosphate from pyridoxamine 5'-phosphate: step 1/1. It functions in the pathway cofactor metabolism; pyridoxal 5'-phosphate salvage; pyridoxal 5'-phosphate from pyridoxine 5'-phosphate: step 1/1. Catalyzes the oxidation of either pyridoxine 5'-phosphate (PNP) or pyridoxamine 5'-phosphate (PMP) into pyridoxal 5'-phosphate (PLP). The protein is Pyridoxine/pyridoxamine 5'-phosphate oxidase of Shewanella frigidimarina (strain NCIMB 400).